Consider the following 437-residue polypeptide: Trigger factor (437 aa).

One can recognise a PPIase FKBP-type domain in the interval 164 to 249 (GDFAKFDFEG…LHEIQCKKIG (86 aa)).

This sequence belongs to the FKBP-type PPIase family. Tig subfamily.

Its subcellular location is the cytoplasm. The enzyme catalyses [protein]-peptidylproline (omega=180) = [protein]-peptidylproline (omega=0). Its function is as follows. Involved in protein export. Acts as a chaperone by maintaining the newly synthesized protein in an open conformation. Functions as a peptidyl-prolyl cis-trans isomerase. The polypeptide is Trigger factor (Campylobacter hominis (strain ATCC BAA-381 / DSM 21671 / CCUG 45161 / LMG 19568 / NCTC 13146 / CH001A)).